We begin with the raw amino-acid sequence, 82 residues long: Translational regulator CsrA (82 aa).

It belongs to the CsrA/RsmA family. In terms of assembly, homodimer; the beta-strands of each monomer intercalate to form a hydrophobic core, while the alpha-helices form wings that extend away from the core.

The protein resides in the cytoplasm. A translational regulator that binds mRNA to regulate translation initiation and/or mRNA stability. Usually binds in the 5'-UTR at or near the Shine-Dalgarno sequence preventing ribosome-binding, thus repressing translation. Its main target seems to be the major flagellin gene, while its function is anatagonized by FliW. This is Translational regulator CsrA from Brachyspira hyodysenteriae (strain ATCC 49526 / WA1).